The sequence spans 208 residues: Small ribosomal subunit protein eS8 (208 aa).

Residues 1–33 (MGISRDHWHKRRATGGKRKPIRKKRKFELGRPA) form a disordered region. A compositionally biased stretch (basic residues) spans 7–26 (HWHKRRATGGKRKPIRKKRK).

The protein belongs to the eukaryotic ribosomal protein eS8 family.

This is Small ribosomal subunit protein eS8 (RpS8) from Apis mellifera (Honeybee).